We begin with the raw amino-acid sequence, 280 residues long: Vitamin B12-binding protein (280 aa).

An N-terminal signal peptide occupies residues 1 to 27 (MMPLGLFPLPRAAAVLLISLLTLPAQA). A Fe/B12 periplasmic-binding domain is found at 30-277 (RVISLSPSTT…QMASIPTPVA (248 aa)). Tyr-57 is a binding site for cyanocob(III)alamin. An intrachain disulfide couples Cys-190 to Cys-266.

This sequence belongs to the BtuF family. The complex is composed of two ATP-binding proteins (BtuD), two transmembrane proteins (BtuC) and a solute-binding protein (BtuF).

The protein localises to the periplasm. Part of the ABC transporter complex BtuCDF involved in vitamin B12 import. Binds vitamin B12 and delivers it to the periplasmic surface of BtuC. The protein is Vitamin B12-binding protein of Yersinia pestis bv. Antiqua (strain Antiqua).